Consider the following 76-residue polypeptide: Glutathione S-transferase (76 aa).

A GST N-terminal domain is found at 1-40 (XVAFETVPVDLMKGEHKQPAYLALQPFGTVPAVVDGDYXL). One can recognise a GST C-terminal domain in the interval 41 to 76 (LSAVLDVYEAHLHGYLAGDFVSLADLAHLPFTDYLV).

This sequence belongs to the GST superfamily. Theta family.

It is found in the cytoplasm. The enzyme catalyses RX + glutathione = an S-substituted glutathione + a halide anion + H(+). Functionally, conjugation of reduced glutathione to a wide number of exogenous and endogenous hydrophobic electrophiles. This Brassica oleracea var. italica (Broccoli) protein is Glutathione S-transferase.